The chain runs to 578 residues: Asparagine synthetase [glutamine-hydrolyzing] 2 (578 aa).

The active-site For GATase activity is cysteine 2. Residues 2–185 (CGILAVLGCI…PGHIYSSKQG (184 aa)) enclose the Glutamine amidotransferase type-2 domain. L-glutamine is bound by residues 50–54 (RLAII), 75–77 (NGE), and aspartate 98. An Asparagine synthetase domain is found at 210–450 (LRNAFEKAVI…LPKHILYRQK (241 aa)). Residues leucine 231, isoleucine 267, and 341–342 (SG) contribute to the ATP site.

As to expression, expressed in the vascular region adjacent to leaf mesophyll cells in the companion cell-sieve tube element complex.

The enzyme catalyses L-aspartate + L-glutamine + ATP + H2O = L-asparagine + L-glutamate + AMP + diphosphate + H(+). The protein operates within amino-acid biosynthesis; L-asparagine biosynthesis. Functionally, essential for nitrogen assimilation, distribution and remobilization within the plant via the phloem. This Arabidopsis thaliana (Mouse-ear cress) protein is Asparagine synthetase [glutamine-hydrolyzing] 2 (ASN2).